Reading from the N-terminus, the 299-residue chain is uncharacterized protein (299 aa).

Residues 25–45 (LLYFFKSLAMILFFIFFSLTS) form a helical membrane-spanning segment.

The protein resides in the membrane. This is an uncharacterized protein from Rickettsia prowazekii (strain Madrid E).